The following is a 304-amino-acid chain: N-acetyl-D-glucosamine kinase (304 aa).

ATP contacts are provided by residues 4–11 and 133–140; these read GFDIGGTK and GFGGGLIF. Residues His157, Cys178, Cys180, and Cys185 each contribute to the Zn(2+) site.

Belongs to the ROK (NagC/XylR) family. NagK subfamily.

It carries out the reaction N-acetyl-D-glucosamine + ATP = N-acetyl-D-glucosamine 6-phosphate + ADP + H(+). It participates in cell wall biogenesis; peptidoglycan recycling. Its function is as follows. Catalyzes the phosphorylation of N-acetyl-D-glucosamine (GlcNAc) derived from cell-wall degradation, yielding GlcNAc-6-P. This Mannheimia succiniciproducens (strain KCTC 0769BP / MBEL55E) protein is N-acetyl-D-glucosamine kinase.